Here is a 452-residue protein sequence, read N- to C-terminus: Pre-mRNA-splicing factor prp46 (452 aa).

Residues 61–70 (AAKQAQAAAA) are compositionally biased toward low complexity. The segment at 61-129 (AAKQAQAAAA…SATRQQPPEW (69 aa)) is disordered. Residues 114-125 (SLIQRPSATRQQ) show a composition bias toward polar residues. WD repeat units lie at residues 141–180 (GHLG…LRLT), 183–222 (GHIS…VIRH), 225–264 (GHLS…NIHV), 267–308 (GHTG…GVLT), 310–349 (HKKG…QNFE), 350–388 (GHNA…RYQT), and 399–438 (EAEA…TPET). The tract at residues 432–452 (DQATPETHPVTWAPTLGRQRY) is disordered.

This sequence belongs to the WD repeat PRL1/PRL2 family. Associated with the spliceosome.

It localises to the cytoplasm. The protein localises to the nucleus. Functionally, involved in pre-mRNA splicing and required for cell cycle progression at G2/M. In Emericella nidulans (strain FGSC A4 / ATCC 38163 / CBS 112.46 / NRRL 194 / M139) (Aspergillus nidulans), this protein is Pre-mRNA-splicing factor prp46 (prp46).